Here is a 177-residue protein sequence, read N- to C-terminus: Large ribosomal subunit protein uL6 (177 aa).

Belongs to the universal ribosomal protein uL6 family. Part of the 50S ribosomal subunit.

In terms of biological role, this protein binds to the 23S rRNA, and is important in its secondary structure. It is located near the subunit interface in the base of the L7/L12 stalk, and near the tRNA binding site of the peptidyltransferase center. The protein is Large ribosomal subunit protein uL6 of Rhodopseudomonas palustris (strain BisB18).